The chain runs to 286 residues: Thymidylate synthase (286 aa).

140 to 141 (RR) contributes to the dUMP binding site. Cys161 serves as the catalytic Nucleophile. Residues 185–188 (RSND), Asn196, and 226–228 (HIY) contribute to the dUMP site. A (6R)-5,10-methylene-5,6,7,8-tetrahydrofolate-binding site is contributed by Asp188. Residue Ala285 coordinates (6R)-5,10-methylene-5,6,7,8-tetrahydrofolate.

The protein belongs to the thymidylate synthase family. Bacterial-type ThyA subfamily. Homodimer.

Its subcellular location is the cytoplasm. The catalysed reaction is dUMP + (6R)-5,10-methylene-5,6,7,8-tetrahydrofolate = 7,8-dihydrofolate + dTMP. It functions in the pathway pyrimidine metabolism; dTTP biosynthesis. Catalyzes the reductive methylation of 2'-deoxyuridine-5'-monophosphate (dUMP) to 2'-deoxythymidine-5'-monophosphate (dTMP) while utilizing 5,10-methylenetetrahydrofolate (mTHF) as the methyl donor and reductant in the reaction, yielding dihydrofolate (DHF) as a by-product. This enzymatic reaction provides an intracellular de novo source of dTMP, an essential precursor for DNA biosynthesis. The protein is Thymidylate synthase of Streptococcus thermophilus (strain CNRZ 1066).